The sequence spans 494 residues: Glycerol kinase 1 (494 aa).

Residue Thr12 participates in ADP binding. ATP-binding residues include Thr12, Thr13, and Ser14. Thr12 provides a ligand contact to sn-glycerol 3-phosphate. Residue Arg16 coordinates ADP. Positions 82, 83, 134, and 243 each coordinate sn-glycerol 3-phosphate. Residues Arg82, Glu83, Tyr134, Asp243, and Gln244 each contribute to the glycerol site. ADP contacts are provided by Thr265 and Gly308. ATP-binding residues include Thr265, Gly308, Gln312, and Gly408. Positions 408 and 412 each coordinate ADP.

The protein belongs to the FGGY kinase family.

The catalysed reaction is glycerol + ATP = sn-glycerol 3-phosphate + ADP + H(+). It participates in polyol metabolism; glycerol degradation via glycerol kinase pathway; sn-glycerol 3-phosphate from glycerol: step 1/1. Its activity is regulated as follows. Inhibited by fructose 1,6-bisphosphate (FBP). Functionally, key enzyme in the regulation of glycerol uptake and metabolism. Catalyzes the phosphorylation of glycerol to yield sn-glycerol 3-phosphate. The polypeptide is Glycerol kinase 1 (Pseudomonas aeruginosa (strain ATCC 15692 / DSM 22644 / CIP 104116 / JCM 14847 / LMG 12228 / 1C / PRS 101 / PAO1)).